Consider the following 60-residue polypeptide: uncharacterized protein (60 aa).

This is an uncharacterized protein from Dictyostelium discoideum (Social amoeba).